The chain runs to 336 residues: 3-isopropylmalate dehydrogenase (336 aa).

Substrate contacts are provided by arginine 87, arginine 97, arginine 121, and aspartate 211. Residues aspartate 211, aspartate 235, and aspartate 239 each coordinate Mg(2+). Position 271–283 (271–283 (GSAPDIAGQGIAD)) interacts with NAD(+).

The protein belongs to the isocitrate and isopropylmalate dehydrogenases family. LeuB type 2 subfamily. In terms of assembly, homodimer. Mg(2+) serves as cofactor. The cofactor is Mn(2+).

Its subcellular location is the cytoplasm. The catalysed reaction is (2R,3S)-3-isopropylmalate + NAD(+) = 4-methyl-2-oxopentanoate + CO2 + NADH. Its pathway is amino-acid biosynthesis; L-leucine biosynthesis; L-leucine from 3-methyl-2-oxobutanoate: step 3/4. Its function is as follows. Catalyzes the oxidation of 3-carboxy-2-hydroxy-4-methylpentanoate (3-isopropylmalate) to 3-carboxy-4-methyl-2-oxopentanoate. The product decarboxylates to 4-methyl-2 oxopentanoate. This chain is 3-isopropylmalate dehydrogenase, found in Rhodococcus opacus (strain B4).